Reading from the N-terminus, the 278-residue chain is Glycyl-dTMP PLP-dependent decarboxylase (278 aa).

The protein belongs to the pyridoxal-phosphate-dependent aminodecarboxylase family.

The enzyme catalyses 5-C(alpha)-glycyl-dTMP in DNA + H(+) = 5-aminoethyl-dUMP in DNA + CO2. Converts 5-Calpha-glycinylthymidine (Calpha-GlyT) into 5-aminoethyl-2'-deoxyuridine (5-NedU) as a step in the pathway leading to thymidine hypermodifications in the viral genome. As a final result of the pathway of hypermodification, 5-aminoethyl-2'-deoxyuridine (5-NedU) substitutes for about 30% of thymidines in the viral DNA. These modifications probably prevent degradation of viral genome by the host restriction-modification antiviral defense system. In Pseudomonas aeruginosa, this protein is Glycyl-dTMP PLP-dependent decarboxylase.